Reading from the N-terminus, the 934-residue chain is Diacylglycerol kinase theta (934 aa).

Positions 1–50 are disordered; sequence MAAAAEPGARTWPGSGSPRLGSPAGSPVLGISGRTRPGSGPERTSRAIGS. 2 positions are modified to phosphoserine: S22 and S26. 3 consecutive Phorbol-ester/DAG-type zinc fingers follow at residues 54–102, 115–162, and 177–228; these read GHSF…KTPC, AHCF…CSDC, and HHHW…APEC. Residues 387–486 enclose the Ras-associating domain; sequence TQEILKIYPG…TRFYVAETRA (100 aa). 2 consecutive short sequence motifs (LXXLL motif) follow at residues 547–551 and 566–570; these read LYMLA and LPDVL. One can recognise a DAGKc domain in the interval 576 to 713; the sequence is PDCCPLLVFV…MDRWTILLDA (138 aa). The segment covering 905-916 has biased composition (basic residues); that stretch reads LRKAKQKPRKAG. The segment at 905–934 is disordered; sequence LRKAKQKPRKAGANRDTRVDTLPAPEGNPL.

This sequence belongs to the eukaryotic diacylglycerol kinase family. In terms of assembly, interacts with RHOA (constitutively activated, GTP-bound); the interaction inhibits DGKQ. Interacts with PRKCE. Interacts with PRKCH. Interacts with PLCB1. Interacts with NR5A1; the interaction requires both LXXLL motifs in DGKQ and is required for full phosphatidic acid-mediated activation of NR5A1. In terms of processing, phosphorylated by PRKCE and PRKCH in vitro. As to expression, widely expressed in all brain regions, including the cortex and hippocampus with a specific expression in neuronal cells (at protein level).

It is found in the cytoplasm. The protein resides in the cytosol. It localises to the cell membrane. The protein localises to the synapse. Its subcellular location is the cytoskeleton. It is found in the nucleus. The protein resides in the nucleus speckle. It localises to the nucleus matrix. It carries out the reaction a 1,2-diacyl-sn-glycerol + ATP = a 1,2-diacyl-sn-glycero-3-phosphate + ADP + H(+). It catalyses the reaction a 1-O-alkyl-sn-glycerol + ATP = a 1-O-alkyl-sn-glycero-3-phosphate + ADP + H(+). The catalysed reaction is 1-O-alkyl-2-acyl-sn-glycerol + ATP = 1-O-alkyl-2-acyl-sn-glycero-3-phosphate + ADP + H(+). The enzyme catalyses 1,2-di-(9Z-octadecenoyl)-sn-glycerol + ATP = 1,2-di-(9Z-octadecenoyl)-sn-glycero-3-phosphate + ADP + H(+). It carries out the reaction 1-O-hexadecyl-sn-glycerol + ATP = 1-O-hexadecyl-sn-glycero-3-phosphate + ADP + H(+). It catalyses the reaction 1-O-hexadecyl-2-acetyl-sn-glycerol + ATP = 1-O-hexadecyl-2-acetyl-sn-glycero-3-phosphate + ADP + H(+). The catalysed reaction is 1-octadecanoyl-2-(5Z,8Z,11Z,14Z-eicosatetraenoyl)-sn-glycerol + ATP = 1-octadecanoyl-2-(5Z,8Z,11Z,14Z-eicosatetraenoyl)-sn-glycero-3-phosphate + ADP + H(+). The protein operates within lipid metabolism; glycerolipid metabolism. Activated by phosphatidylserine. Functionally, diacylglycerol kinase that converts diacylglycerol/DAG into phosphatidic acid/phosphatidate/PA and regulates the respective levels of these two bioactive lipids. Thereby, acts as a central switch between the signaling pathways activated by these second messengers with different cellular targets and opposite effects in numerous biological processes. Within the adrenocorticotropic hormone signaling pathway, produces phosphatidic acid which in turn activates NR5A1 and subsequent steroidogenic gene transcription. Also functions downstream of the nerve growth factor signaling pathway being specifically activated in the nucleus by the growth factor. Through its diacylglycerol activity also regulates synaptic vesicle endocytosis. In Mus musculus (Mouse), this protein is Diacylglycerol kinase theta (Dgkq).